The following is a 1033-amino-acid chain: MSGSFWKFGQDYSIESPVSKILNSAFIKINKDQDDDVPTGTCEENIADDEDNSSHDYAASEDNVVNENEEKEEENTLPTTESEYENYRPNLDVLDDLLDDDELYTELMCSNFKLLIFLKYPEVLSKLIEYVTNEKILDEETDSAKKPEIIEGVNDHPILIERDRKDKKEDAEEGGDSEETTNDSDHDSGDERSVDSEETSITLPPESEEQVETRRARIAAEILSADVWPISAAIMQNKDLLGRLWSILDHPAPLPIPASTYFMKINERLLDMDITGMLEFILSRDSLVARFLTHVDNPSLMDFLLKVISTDKPDSPTGVIKILKSQELIPKLLDHLNPEYGISTQSAAGDFIKAFVTLSTNSSNELASGIGPNELTRQLVSEEMIEKLIKIMLKGGTSLSNGVGIIIELIRKNNSDYDFIQLVYTTLESHPPTDRDPIHLIHLVKLFAKHMPDFADMLDKTKLPLMEMPFGNIEPLGFERFKICELIAELLHCSNMTLLNEPNGEMIAQERDIERAKELETSTEKENITAIVDNKSSYYDKDCVEKDITENLGALQINNQGSEEDELNDTGVSSVKLDVKSDAKVVEGLENDASGVELYDETLSDTESVRECLREKPLVGDRLKIALEDTKILISILDMFTEFPWNNFLHNVIFDIAQQIFNGPLKTGYNRFLLKDYLVDAYLTKKIVDADKACQDYEKKTGLRHGYMGHLTLVAEEISKFKEYIDEMKLTFCNTAVSDRFEEPFWKEYSETILADTREKYNTVLGDFGNDQESDDDVIRNSDSEDIIGDTEGNENYGNGENDELLSNGHDSGNMDLYYNFNNNENEENEEDYAEYSDVDNKNYYNNVETNDDDYDSDDGKSKSAESEFTDKISEHRDGNSLYNEDNDENGSDKWTSGTSLFPPDHFPSRSQPSDPKLQDQNIFHHQFDFEGVGDDDDYMDPNDDGQSYARPGNPLYTTPKTPPRPKTILFNSLSALDNNGEDEEVALGTSVDDRMDNEISSDEEDSEDEDEENDMGNEEGYSLYRSRSKEAF.

Disordered regions lie at residues 32-82 (DQDD…TTES), 147-213 (PEII…QVET), 768-813 (FGND…HDSG), and 828-1033 (ENEE…KEAF). Basic and acidic residues predominate over residues 158-170 (ILIERDRKDKKED). The segment covering 171–182 (AEEGGDSEETTN) has biased composition (acidic residues). Basic and acidic residues predominate over residues 183–195 (DSDHDSGDERSVD). S774 is subject to Phosphoserine. 2 stretches are compositionally biased toward acidic residues: residues 784 to 793 (SEDIIGDTEG) and 828 to 838 (ENEEDYAEYSD). A phosphoserine mark is found at S857, S862, and S892. Residues 858-879 (DDGKSKSAESEFTDKISEHRDG) show a composition bias toward basic and acidic residues. Positions 909 to 924 (SRSQPSDPKLQDQNIF) are enriched in polar residues. A compositionally biased stretch (acidic residues) spans 932–944 (GVGDDDDYMDPND). T990 carries the post-translational modification Phosphothreonine. S991 is subject to Phosphoserine. Residues 1000-1018 (ISSDEEDSEDEDEENDMGN) are compositionally biased toward acidic residues.

The protein belongs to the SAPS family. Associates with the SIT4 protein phosphatase catalytic subunit in a cell-cycle-dependent manner. Hyperphosphorylated in the absence of SIT4.

The protein localises to the cytoplasm. Functionally, positive regulator of protein phosphatase SIT4. Involved in the general amino acid control (GAAC) response regulated by TOR. Involved in the dephosphorylation of the elongator complex subunit IKI3. The protein is SIT4-associating protein SAP190 (SAP190) of Saccharomyces cerevisiae (strain Lalvin EC1118 / Prise de mousse) (Baker's yeast).